Reading from the N-terminus, the 90-residue chain is Protein LIM1 (90 aa).

Residues Met-1–Ser-26 form the signal peptide. 4 disulfide bridges follow: Cys-29/Cys-66, Cys-39/Cys-55, Cys-56/Cys-81, and Cys-68/Cys-88.

It belongs to the A9/FIL1 family.

Its subcellular location is the secreted. This is Protein LIM1 (LIM1) from Lilium longiflorum (Trumpet lily).